The sequence spans 315 residues: Putative carboxypeptidase RC0549 (315 aa).

Catalysis depends on S125, which acts as the Nucleophile. Catalysis depends on charge relay system residues E225 and H288.

This sequence belongs to the peptidase S66 family.

The chain is Putative carboxypeptidase RC0549 from Rickettsia conorii (strain ATCC VR-613 / Malish 7).